The sequence spans 474 residues: MTQKLHIKTWGCQMNEYDSSKMADLLLNTHGLELTDVPEEADVLLLNTCSIREKAQEKVFHQLGRWKELKKQNPSLVIGVGGCVASQEGEHIRSRAPYVDIVFGPQTLHRLPEMINQIRGGKSAVVDVSFPEIEKFDRLPEPRAEGPTAFVSIMEGCNKYCSFCVVPYTRGEEVSRPVDDVLFEIAQLAEQGVREVNLLGQNVNAYRGPTHDGGICSFAELLRLVASIDGIDRLRFTTSHPIEFTDDIIDVYADTPELVSFLHLPVQSGSDRVLNLMKRNHTALEYKSIIRKLKKVRPNIQISSDFIVGFPGETDQDFEDTMNLIAQVNFDMSFSFIYSARPGTPAADMPDDVTEEEKKQRLYLLQQRINNQAAQFSRAMLGTEQRVLVEGPSKKDIMELTGRTETNRIVNFAGTPNMIGKFVDIKITDVYTNSLRGEVVRTEDEMGLRIVQSPQVVINRTRKEDELGVGHYQG.

The region spanning 3–120 (QKLHIKTWGC…LPEMINQIRG (118 aa)) is the MTTase N-terminal domain. Positions 12, 49, 83, 157, 161, and 164 each coordinate [4Fe-4S] cluster. Residues 143–375 (RAEGPTAFVS…QQRINNQAAQ (233 aa)) form the Radical SAM core domain. The 64-residue stretch at 378 to 441 (RAMLGTEQRV…TNSLRGEVVR (64 aa)) folds into the TRAM domain.

It belongs to the methylthiotransferase family. MiaB subfamily. As to quaternary structure, monomer. It depends on [4Fe-4S] cluster as a cofactor.

The protein localises to the cytoplasm. It catalyses the reaction N(6)-dimethylallyladenosine(37) in tRNA + (sulfur carrier)-SH + AH2 + 2 S-adenosyl-L-methionine = 2-methylsulfanyl-N(6)-dimethylallyladenosine(37) in tRNA + (sulfur carrier)-H + 5'-deoxyadenosine + L-methionine + A + S-adenosyl-L-homocysteine + 2 H(+). Catalyzes the methylthiolation of N6-(dimethylallyl)adenosine (i(6)A), leading to the formation of 2-methylthio-N6-(dimethylallyl)adenosine (ms(2)i(6)A) at position 37 in tRNAs that read codons beginning with uridine. The sequence is that of tRNA-2-methylthio-N(6)-dimethylallyladenosine synthase from Histophilus somni (strain 129Pt) (Haemophilus somnus).